A 79-amino-acid chain; its full sequence is UPF0349 protein BCE_5075 (79 aa).

Belongs to the UPF0349 family.

This chain is UPF0349 protein BCE_5075, found in Bacillus cereus (strain ATCC 10987 / NRS 248).